Here is a 116-residue protein sequence, read N- to C-terminus: Putative BPES syndrome breakpoint region protein (116 aa).

In terms of tissue distribution, seems to be expressed only in testis.

The chain is Putative BPES syndrome breakpoint region protein (BPESC1) from Homo sapiens (Human).